Here is a 148-residue protein sequence, read N- to C-terminus: Single-stranded DNA-binding protein 2 (148 aa).

The 106-residue stretch at 4–109 (INSVIIAGNL…IKARRIQFLN (106 aa)) folds into the SSB domain.

In terms of assembly, homotetramer.

The sequence is that of Single-stranded DNA-binding protein 2 (ssb2) from Chlorobaculum tepidum (strain ATCC 49652 / DSM 12025 / NBRC 103806 / TLS) (Chlorobium tepidum).